Reading from the N-terminus, the 556-residue chain is Undecaprenyl phosphate-alpha-4-amino-4-deoxy-L-arabinose arabinosyl transferase (556 aa).

10 helical membrane passes run 88 to 108 (FASVFSTALSALLVFWLAMML), 116 to 136 (LLAATIYLTSLLVYGIGTYSV), 179 to 199 (FMTKGFLALALPVISVLPVAL), 207 to 227 (LLLFGPLAIVVAVLLSAPWAL), 258 to 278 (APFWYYLPFLIVGTFPWLALL), 296 to 316 (FFLLCWMVMPLLFFSIAKGKL), 319 to 339 (YILPCFAPLALLMAAWISGLA), 355 to 375 (IVFGGVLGLAVAALGLGIIVP), 384 to 404 (LTIISGIVCFIGWIAFAAVSL), and 410 to 430 (WGYLVAGCPLFLALLVGGSIP).

This sequence belongs to the glycosyltransferase 83 family.

It localises to the cell inner membrane. It catalyses the reaction 4-amino-4-deoxy-alpha-L-arabinopyranosyl di-trans,octa-cis-undecaprenyl phosphate + lipid IVA = lipid IIA + di-trans,octa-cis-undecaprenyl phosphate.. Its pathway is lipopolysaccharide metabolism; 4-amino-4-deoxy-beta-L-arabinose-lipid A biosynthesis. Functionally, catalyzes the transfer of the L-Ara4N moiety of the glycolipid undecaprenyl phosphate-alpha-L-Ara4N to lipid A. The modified arabinose is attached to lipid A and is required for resistance to polymyxin and cationic antimicrobial peptides. The polypeptide is Undecaprenyl phosphate-alpha-4-amino-4-deoxy-L-arabinose arabinosyl transferase (Pectobacterium atrosepticum (strain SCRI 1043 / ATCC BAA-672) (Erwinia carotovora subsp. atroseptica)).